We begin with the raw amino-acid sequence, 159 residues long: MSNFTHINASGEANMVDVSAKQETVREARAEAFVHMAPETLKLIVSGSHHKGDVFATARIAGIQAAKKTWDLIPLCHPLLLTKVEVQLEAIEAENMVRIESVCKLTGKTGVEMEALTAASVAALTIYDMCKAVQKDMVISQVRLLEKTGGKSGHFKADA.

Substrate contacts are provided by residues 75–77 (LCH) and 113–114 (ME). Residue Asp128 is part of the active site.

This sequence belongs to the MoaC family. As to quaternary structure, homohexamer; trimer of dimers.

It carries out the reaction (8S)-3',8-cyclo-7,8-dihydroguanosine 5'-triphosphate = cyclic pyranopterin phosphate + diphosphate. It participates in cofactor biosynthesis; molybdopterin biosynthesis. Functionally, catalyzes the conversion of (8S)-3',8-cyclo-7,8-dihydroguanosine 5'-triphosphate to cyclic pyranopterin monophosphate (cPMP). This is Cyclic pyranopterin monophosphate synthase from Aliivibrio salmonicida (strain LFI1238) (Vibrio salmonicida (strain LFI1238)).